The following is a 204-amino-acid chain: MTSQPLRVGIGGPVGSGKTALTLALCRELRERYNLAVVTNDIYTQEDAQFLVRNEALAPERIIGVETGGCPHTAIREDASINLEAVDQLNRRFPGLELILVESGGDNLSATFSPELSDLTLYVIDVSAGDKIPRKGGPGICKSDLLVINKIDLAPLVGASLEVMDEDARRMRGDKPFVFSNQKTGQGLAEIIAFIERQGLLTAA.

12-19 is a binding site for GTP; that stretch reads GPVGSGKT.

This sequence belongs to the SIMIBI class G3E GTPase family. UreG subfamily. Homodimer. UreD, UreF and UreG form a complex that acts as a GTP-hydrolysis-dependent molecular chaperone, activating the urease apoprotein by helping to assemble the nickel containing metallocenter of UreC. The UreE protein probably delivers the nickel.

The protein resides in the cytoplasm. Functionally, facilitates the functional incorporation of the urease nickel metallocenter. This process requires GTP hydrolysis, probably effectuated by UreG. This Pseudomonas paraeruginosa (strain DSM 24068 / PA7) (Pseudomonas aeruginosa (strain PA7)) protein is Urease accessory protein UreG.